A 209-amino-acid polypeptide reads, in one-letter code: Heat shock protein beta-1 (209 aa).

The residue at position 12 (arginine 12) is an Omega-N-methylarginine. At serine 13 the chain carries Phosphoserine. Serine 15 is modified (phosphoserine; by MAPKAPK2 and MAPKAPK3). Phosphoserine is present on serine 27. Positions 74–209 (APAYSRALSR…AGKSEQSGAK (136 aa)) are interaction with TGFB1I1. The sHSP domain maps to 80-188 (ALSRQLSSGV…QSAEITIPVT (109 aa)). Phosphoserine; by MAPKAPK2, MAPKAPK3 and MAPKAPK5 is present on residues serine 82 and serine 86. A phosphoserine mark is found at serine 87, serine 90, and serine 102. Lysine 127 bears the N6-acetyllysine mark. Residue threonine 178 is modified to Phosphothreonine. A phosphoserine mark is found at serine 180 and serine 203.

This sequence belongs to the small heat shock protein (HSP20) family. Homooligomer. Homodimer; becomes monomeric upon activation. Heterooligomer; with HSPB6. Associates with alpha- and beta-tubulin. Interacts with TGFB1I1. Interacts with CRYAB. Interacts with HSPB8. Interacts with HSPBAP1. Post-translationally, phosphorylated upon exposure to protein kinase C activators and heat shock. Phosphorylation by MAPKAPK2 and MAPKAPK3 in response to stress dissociates HSPB1 from large small heat-shock protein (sHsps) oligomers and impairs its chaperone activity and ability to protect against oxidative stress effectively. Phosphorylation by MAPKAPK5 in response to PKA stimulation induces F-actin rearrangement.

It localises to the cytoplasm. Its subcellular location is the nucleus. It is found in the cytoskeleton. The protein resides in the spindle. In terms of biological role, small heat shock protein which functions as a molecular chaperone probably maintaining denatured proteins in a folding-competent state. Plays a role in stress resistance and actin organization. Through its molecular chaperone activity may regulate numerous biological processes including the phosphorylation and the axonal transport of neurofilament proteins. The chain is Heat shock protein beta-1 (HSPB1) from Canis lupus familiaris (Dog).